A 227-amino-acid polypeptide reads, in one-letter code: Cytochrome c oxidase subunit 2 (227 aa).

Residues 1–14 (MAYPFQLGLQDATS) are Mitochondrial intermembrane-facing. The chain crosses the membrane as a helical span at residues 15–45 (PIMEELLHFHDHTLMIVFLISSLVLYIISLM). At 46-59 (LTTKLTHTSTMDAQ) the chain is on the mitochondrial matrix side. Residues 60–87 (EVETVWTILPAIILILIALPSLRILYMM) traverse the membrane as a helical segment. Topologically, residues 88–227 (DEINNPSLTV…YFETWSALMV (140 aa)) are mitochondrial intermembrane. Residues H161, C196, E198, C200, H204, and M207 each contribute to the Cu cation site. Position 198 (E198) interacts with Mg(2+). At Y218 the chain carries Phosphotyrosine.

The protein belongs to the cytochrome c oxidase subunit 2 family. As to quaternary structure, component of the cytochrome c oxidase (complex IV, CIV), a multisubunit enzyme composed of 14 subunits. The complex is composed of a catalytic core of 3 subunits MT-CO1, MT-CO2 and MT-CO3, encoded in the mitochondrial DNA, and 11 supernumerary subunits COX4I, COX5A, COX5B, COX6A, COX6B, COX6C, COX7A, COX7B, COX7C, COX8 and NDUFA4, which are encoded in the nuclear genome. The complex exists as a monomer or a dimer and forms supercomplexes (SCs) in the inner mitochondrial membrane with NADH-ubiquinone oxidoreductase (complex I, CI) and ubiquinol-cytochrome c oxidoreductase (cytochrome b-c1 complex, complex III, CIII), resulting in different assemblies (supercomplex SCI(1)III(2)IV(1) and megacomplex MCI(2)III(2)IV(2)). Found in a complex with TMEM177, COA6, COX18, COX20, SCO1 and SCO2. Interacts with TMEM177 in a COX20-dependent manner. Interacts with COX20. Interacts with COX16. Cu cation is required as a cofactor.

It is found in the mitochondrion inner membrane. The enzyme catalyses 4 Fe(II)-[cytochrome c] + O2 + 8 H(+)(in) = 4 Fe(III)-[cytochrome c] + 2 H2O + 4 H(+)(out). Component of the cytochrome c oxidase, the last enzyme in the mitochondrial electron transport chain which drives oxidative phosphorylation. The respiratory chain contains 3 multisubunit complexes succinate dehydrogenase (complex II, CII), ubiquinol-cytochrome c oxidoreductase (cytochrome b-c1 complex, complex III, CIII) and cytochrome c oxidase (complex IV, CIV), that cooperate to transfer electrons derived from NADH and succinate to molecular oxygen, creating an electrochemical gradient over the inner membrane that drives transmembrane transport and the ATP synthase. Cytochrome c oxidase is the component of the respiratory chain that catalyzes the reduction of oxygen to water. Electrons originating from reduced cytochrome c in the intermembrane space (IMS) are transferred via the dinuclear copper A center (CU(A)) of subunit 2 and heme A of subunit 1 to the active site in subunit 1, a binuclear center (BNC) formed by heme A3 and copper B (CU(B)). The BNC reduces molecular oxygen to 2 water molecules using 4 electrons from cytochrome c in the IMS and 4 protons from the mitochondrial matrix. The protein is Cytochrome c oxidase subunit 2 (MT-CO2) of Urocyon cinereoargenteus (Gray fox).